Here is a 622-residue protein sequence, read N- to C-terminus: Serine/threonine-protein kinase MAK (622 aa).

The Protein kinase domain maps to 4-284; that stretch reads YTTMRQLGDG…ASQALKHPYF (281 aa). Residues 10 to 18 and Lys-33 contribute to the ATP site; that span reads LGDGTYGSV. The active-site Proton acceptor is Asp-125. The residue at position 157 (Thr-157) is a Phosphothreonine; by autocatalysis. The residue at position 159 (Tyr-159) is a Phosphotyrosine; by autocatalysis. The tract at residues 301 to 373 is disordered; sequence QTLHKQLQPP…HHKQPQTMFP (73 aa).

It belongs to the protein kinase superfamily. CMGC Ser/Thr protein kinase family. CDC2/CDKX subfamily. In terms of assembly, interacts with RP1. Interacts with AR and CDK20. Found in a complex containing MAK, AR and NCOA3. Interacts with FZR1 (via WD repeats). It depends on Mg(2+) as a cofactor. Autophosphorylated. Phosphorylated on serine and threonine residues. In terms of tissue distribution, expressed mainly in testicular cells at and after meiosis.

The protein localises to the nucleus. Its subcellular location is the cytoplasm. It localises to the cytoskeleton. It is found in the microtubule organizing center. The protein resides in the centrosome. The protein localises to the spindle. Its subcellular location is the midbody. It localises to the cell projection. It is found in the cilium. The protein resides in the photoreceptor outer segment. The protein localises to the photoreceptor inner segment. The enzyme catalyses L-seryl-[protein] + ATP = O-phospho-L-seryl-[protein] + ADP + H(+). The catalysed reaction is L-threonyl-[protein] + ATP = O-phospho-L-threonyl-[protein] + ADP + H(+). In terms of biological role, essential for the regulation of ciliary length and required for the long-term survival of photoreceptors. Could play an important function in spermatogenesis. Phosphorylates FZR1 in a cell cycle-dependent manner. Plays a role in the transcriptional coactivation of AR. The protein is Serine/threonine-protein kinase MAK (Mak) of Rattus norvegicus (Rat).